Here is a 207-residue protein sequence, read N- to C-terminus: dTTP/UTP pyrophosphatase (207 aa).

D79 functions as the Proton acceptor in the catalytic mechanism.

It belongs to the Maf family. YhdE subfamily. A divalent metal cation is required as a cofactor.

Its subcellular location is the cytoplasm. It carries out the reaction dTTP + H2O = dTMP + diphosphate + H(+). It catalyses the reaction UTP + H2O = UMP + diphosphate + H(+). Functionally, nucleoside triphosphate pyrophosphatase that hydrolyzes dTTP and UTP. May have a dual role in cell division arrest and in preventing the incorporation of modified nucleotides into cellular nucleic acids. The sequence is that of dTTP/UTP pyrophosphatase from Rhodopseudomonas palustris (strain BisB5).